A 557-amino-acid polypeptide reads, in one-letter code: Urocanate hydratase (557 aa).

Positions Met1–Asn20 are disordered. NAD(+) contacts are provided by residues Gly52–Gly53, Gln130, Gly176–Gly178, Glu196, Arg201, Asn242–Ala243, Gln263–His267, Tyr273–Leu274, and Tyr322. The active site involves Cys410. Gly492 lines the NAD(+) pocket.

Belongs to the urocanase family. NAD(+) is required as a cofactor.

Its subcellular location is the cytoplasm. It catalyses the reaction 4-imidazolone-5-propanoate = trans-urocanate + H2O. It participates in amino-acid degradation; L-histidine degradation into L-glutamate; N-formimidoyl-L-glutamate from L-histidine: step 2/3. Its function is as follows. Catalyzes the conversion of urocanate to 4-imidazolone-5-propionate. The polypeptide is Urocanate hydratase (Brucella abortus (strain S19)).